Consider the following 185-residue polypeptide: Large ribosomal subunit protein uL5 (185 aa).

It belongs to the universal ribosomal protein uL5 family. In terms of assembly, part of the 50S ribosomal subunit; part of the 5S rRNA/L5/L18/L25 subcomplex. Contacts the 5S rRNA and the P site tRNA. Forms a bridge to the 30S subunit in the 70S ribosome.

This is one of the proteins that bind and probably mediate the attachment of the 5S RNA into the large ribosomal subunit, where it forms part of the central protuberance. In the 70S ribosome it contacts protein S13 of the 30S subunit (bridge B1b), connecting the 2 subunits; this bridge is implicated in subunit movement. Contacts the P site tRNA; the 5S rRNA and some of its associated proteins might help stabilize positioning of ribosome-bound tRNAs. The polypeptide is Large ribosomal subunit protein uL5 (Bradyrhizobium sp. (strain ORS 278)).